The sequence spans 296 residues: Phosphoribosylaminoimidazole-succinocarboxamide synthase (296 aa).

This sequence belongs to the SAICAR synthetase family.

It carries out the reaction 5-amino-1-(5-phospho-D-ribosyl)imidazole-4-carboxylate + L-aspartate + ATP = (2S)-2-[5-amino-1-(5-phospho-beta-D-ribosyl)imidazole-4-carboxamido]succinate + ADP + phosphate + 2 H(+). Its pathway is purine metabolism; IMP biosynthesis via de novo pathway; 5-amino-1-(5-phospho-D-ribosyl)imidazole-4-carboxamide from 5-amino-1-(5-phospho-D-ribosyl)imidazole-4-carboxylate: step 1/2. The protein is Phosphoribosylaminoimidazole-succinocarboxamide synthase of Lachnospira eligens (strain ATCC 27750 / DSM 3376 / VPI C15-48 / C15-B4) (Eubacterium eligens).